A 177-amino-acid polypeptide reads, in one-letter code: ATP synthase subunit delta (177 aa).

Belongs to the ATPase delta chain family. In terms of assembly, F-type ATPases have 2 components, F(1) - the catalytic core - and F(0) - the membrane proton channel. F(1) has five subunits: alpha(3), beta(3), gamma(1), delta(1), epsilon(1). F(0) has three main subunits: a(1), b(2) and c(10-14). The alpha and beta chains form an alternating ring which encloses part of the gamma chain. F(1) is attached to F(0) by a central stalk formed by the gamma and epsilon chains, while a peripheral stalk is formed by the delta and b chains.

The protein resides in the cell inner membrane. Its function is as follows. F(1)F(0) ATP synthase produces ATP from ADP in the presence of a proton or sodium gradient. F-type ATPases consist of two structural domains, F(1) containing the extramembraneous catalytic core and F(0) containing the membrane proton channel, linked together by a central stalk and a peripheral stalk. During catalysis, ATP synthesis in the catalytic domain of F(1) is coupled via a rotary mechanism of the central stalk subunits to proton translocation. In terms of biological role, this protein is part of the stalk that links CF(0) to CF(1). It either transmits conformational changes from CF(0) to CF(1) or is implicated in proton conduction. This Shewanella piezotolerans (strain WP3 / JCM 13877) protein is ATP synthase subunit delta.